A 104-amino-acid chain; its full sequence is Replication restart protein PriB (104 aa).

In terms of domain architecture, SSB spans 2–101 (TNRLVLSGTV…LHAEQIELID (100 aa)). An intrachain disulfide couples C48 to C80. Positions 82-89 (KAKNGLSK) match the L45 loop motif.

It belongs to the PriB family. Homodimer. Primosome assembly occurs via a 'hand-off' mechanism. PriA binds to replication forks, subsequently PriB then DnaT bind; DnaT then displaces ssDNA to generate the helicase loading substrate, which allows DnaC to load helicase DnaB onto the fork. ssDNA is displaced from the PriB-ssDNA complex by DnaT. In a PriA-PriB-replication fork structure, movement of the PriA CRR domain exposes a surface to which PriB binds and contacts ssDNA emerging from the PriA pore. Binds PriA; binding is improved in the presence of ssDNA. Weakly binds DnaT; binding is improved in the presence of ssDNA; as DnaT levels increase PriB dissociates from ssDNA. Component of the replication restart primosome, which is composed of PriA, PriB, PriC, DnaB and DnaT; DnaG primase associates transiently with this complex. Component of the preprimosomal complex composed of one monomer of PriC and DnaT, two monomers of PriA, two dimers of PriB and one hexamer of DnaB. In terms of processing, an intersubunit disulfide bond is seen in some crystals.

Functionally, involved in the restart of stalled replication forks, which reloads the replicative helicase (DnaB) on sites other than the origin of replication; the PriA-PriB pathway is the major replication restart pathway. There are several restart pathways, the PriA-PriB pathway is subdivided into 2 distinct pathways. priB and priC have redundant roles in the cell. During primosome assembly it facilitates complex formation between PriA and DnaT on DNA; stabilizes PriA on DNA, presumably by preventing or inhibiting PriA DNA translocation activity. Forms a branched DNA-PriA-PriB complex when the lagging strand is single-stranded (ss)DNA. Binds ssDNA in the presence and absence of ssDNA DNA-binding protein (SSB), does not bind branched structures. DNA binding, forming spiral filaments on ssDNA, is cooperative. Stimulates the helicase activity of PriA. The homodimer binds 12 nucleotides of ssDNA. Binds homo-pyrimidine tracts better than homo-purine tracts. Its function is as follows. Genetic interactions among priB, dam, lexA, nagC, polA, rdgB, rdgB, rep and uup link the PriA-PriB replication restart pathway to DNA double-strand break repair. The chain is Replication restart protein PriB from Escherichia coli (strain K12).